Here is a 361-residue protein sequence, read N- to C-terminus: UPF0283 membrane protein Smed_1530 (361 aa).

The tract at residues 1–40 (MNDDSNGRRRRPAAFPVGTEDATSRELEQTPRRAPGSFSD) is disordered. Residues 22 to 31 (ATSRELEQTP) are compositionally biased toward basic and acidic residues. A run of 2 helical transmembrane segments spans residues 76–96 (FGKI…GLWV) and 109–129 (WLGY…LIVV).

This sequence belongs to the UPF0283 family.

It is found in the cell inner membrane. The chain is UPF0283 membrane protein Smed_1530 from Sinorhizobium medicae (strain WSM419) (Ensifer medicae).